The sequence spans 134 residues: Putative membrane protein insertion efficiency factor (134 aa).

It belongs to the UPF0161 family.

The protein localises to the cell inner membrane. Could be involved in insertion of integral membrane proteins into the membrane. In Rhizobium etli (strain ATCC 51251 / DSM 11541 / JCM 21823 / NBRC 15573 / CFN 42), this protein is Putative membrane protein insertion efficiency factor.